The sequence spans 231 residues: tRNA (guanine-N(1)-)-methyltransferase (231 aa).

Residues Gly109 and 133–138 contribute to the S-adenosyl-L-methionine site; that span reads IGDYVL.

Belongs to the RNA methyltransferase TrmD family. Homodimer.

The protein resides in the cytoplasm. It carries out the reaction guanosine(37) in tRNA + S-adenosyl-L-methionine = N(1)-methylguanosine(37) in tRNA + S-adenosyl-L-homocysteine + H(+). In terms of biological role, specifically methylates guanosine-37 in various tRNAs. In Nocardia farcinica (strain IFM 10152), this protein is tRNA (guanine-N(1)-)-methyltransferase.